Here is a 372-residue protein sequence, read N- to C-terminus: GPN-loop GTPase 1 (372 aa).

Ala2 is subject to N-acetylalanine. 29-34 is a binding site for GTP; sequence GSGKTT. Positions 86–88 match the Gly-Pro-Asn (GPN)-loop; involved in dimer interface motif; that stretch reads GPN. 189–192 lines the GTP pocket; sequence NKTD. A phosphoserine mark is found at Ser301 and Ser314. The disordered stretch occupies residues 303–372; the sequence is ALDPEAGKGN…ESMAHWKRNK (70 aa). Thr328 is modified (phosphothreonine). Acidic residues predominate over residues 330-342; it reads DEEDEEADSDTDD. Position 338 is a phosphoserine (Ser338). Thr340 is modified (phosphothreonine). The segment covering 343 to 355 has biased composition (basic and acidic residues); that stretch reads IDHRVTEESREEP.

The protein belongs to the GPN-loop GTPase family. Heterodimer with GPN3. Binds to RNA polymerase II (RNAPII). Interacts directly with RNAPII subunits RPB4 and RPB7 and the CTD of RPB1. Interacts with XPA.

It localises to the cytoplasm. Its subcellular location is the nucleus. Small GTPase required for proper nuclear import of RNA polymerase II (RNAPII). May act at an RNAP assembly step prior to nuclear import. Forms an interface between the RNA polymerase II enzyme and chaperone/scaffolding proteins, suggesting that it is required to connect RNA polymerase II to regulators of protein complex formation. May be involved in nuclear localization of XPA. This chain is GPN-loop GTPase 1, found in Mus musculus (Mouse).